The primary structure comprises 373 residues: RNA 3'-terminal phosphate cyclase-like protein (373 aa).

It belongs to the RNA 3'-terminal cyclase family. Type 2 subfamily. As to quaternary structure, part of the small subunit (SSU) processome, composed of more than 70 proteins and the RNA chaperone small nucleolar RNA (snoRNA) U3. Interacts with BMS1.

It is found in the nucleus. Its subcellular location is the nucleolus. As part of the small subunit (SSU) processome, it plays a role in 40S-ribosomal-subunit biogenesis in the early pre-rRNA processing steps at sites A0, A1 and A2 that are required for proper maturation of the 18S RNA. Activates BMS1 by promoting GDP/GTP exchange. Does not have cyclase activity. This chain is RNA 3'-terminal phosphate cyclase-like protein (RCL1), found in Bos taurus (Bovine).